We begin with the raw amino-acid sequence, 87 residues long: Kappa-bungarotoxin (87 aa).

Residues 1–21 (MKTLLLTLVVVTIVCLDLGYT) form the signal peptide. Intrachain disulfides connect Cys24/Cys42, Cys35/Cys63, Cys48/Cys52, Cys67/Cys79, and Cys80/Cys85.

Belongs to the three-finger toxin family. Long-chain subfamily. Kappa-neurotoxin sub-subfamily. As to quaternary structure, homodimer and heterodimer; non-covalently linked. Expressed by the venom gland.

It localises to the secreted. Postsynaptic neurotoxin that binds and inhibits neuronal nicotinic acetylcholine receptors (nAChR) with high affinity (IC(50)&lt;100 nM). Is a selective, and slowly reversible antagonist of alpha-3/CHRNA3-containing and some alpha-4/CHRNA4-containing AChRs. The chain is Kappa-bungarotoxin from Bungarus multicinctus (Many-banded krait).